Here is a 517-residue protein sequence, read N- to C-terminus: Cytochrome P450 monooxygenase cdmJ (517 aa).

A helical membrane pass occupies residues 15–35 (YMWSLTLFALCLSAILMFPFL). A glycan (N-linked (GlcNAc...) asparagine) is linked at asparagine 404. Cysteine 451 contacts heme.

Belongs to the cytochrome P450 family. Heme serves as cofactor.

Its subcellular location is the membrane. It carries out the reaction 3-hydroxypentacecilide A + NADPH + O2 + H(+) = chrodrimanin F + NADP(+) + H2O. The enzyme catalyses chrodrimanin C + NADPH + O2 + H(+) = chrodrimanin H + NADP(+) + H2O. It catalyses the reaction verruculide A + NADPH + O2 + H(+) = chrodrimanin E + NADP(+) + H2O. The catalysed reaction is chrodrimanin T + NADPH + O2 + H(+) = chrodrimanin A + NADP(+) + H2O. Its pathway is secondary metabolite biosynthesis; terpenoid biosynthesis. Cytochrome P450 monooxygenase; part of the gene cluster that mediates the biosynthesis of chrodrimanin B, a meroterpenoid that acts as a potent blocker of insect GABA-gated chloride channels. The first step of the pathway is the biosynthesis of 6-hydroxymellein by the polyketide synthase cdmE. The prenyltransferase cdmH acts as a 6-hydroxymellein 5-farnesyltransferase and produces the hydrophobic metabolite verruculide C. The FAD-dependent monooxygenase cdmI further converts verruculide C into verruculide B. The terpene cyclase cdmG then produced the pentacyclic molecule 3-hydroxypentacecilide A, the backbone structure of chrodrimanin B, via folding the farnesyl moiety of the substrate into the chair-boat conformation. The short-chain dehydrogenase/reductase cdmF functions as the 3-OH dehydrogenase that oxidizes the C-3 hydroxyl group of 3-hydroxypentacecilide A and produces chrodrimanin C, the dehydrogenated product of 3-hydroxypentacecilide A. The cytochrome P450 monooxygenase cdmJ then accepts both 3-hydroxypentacecilide A and chrodrimanin C and functions as a C-7-beta-hydroxylase to produce respectively chrodrimanin H and chrodrimanin F. The dioxygenase cdmA accepts chrodrimanin H to afford chrodrimanin E, which is further transformed to chrodrimanin A by the dioxygenase cdmD. CdmA can also accept chrodrimanin C as substrate to convert it into verruculide A, which is further converted into chrodrimanin T by cdmD. The last step of the biosynthesis is proposed to be performed by the acetyltransferase cdmC which acetylates chrodrimanin A to yield chrodrimanin B. The pathway may also lead to the production of additional shunt products, including chrodrimanins T and U. The chain is Cytochrome P450 monooxygenase cdmJ from Talaromyces verruculosus (Penicillium verruculosum).